Here is a 391-residue protein sequence, read N- to C-terminus: Phosphoglycerate kinase (391 aa).

Substrate contacts are provided by residues 21–23 (DLN), arginine 36, 59–62 (HLGR), arginine 113, and arginine 146. ATP is bound by residues lysine 197, glutamate 319, and 345 to 348 (GGDT).

The protein belongs to the phosphoglycerate kinase family. As to quaternary structure, monomer.

It is found in the cytoplasm. The catalysed reaction is (2R)-3-phosphoglycerate + ATP = (2R)-3-phospho-glyceroyl phosphate + ADP. It participates in carbohydrate degradation; glycolysis; pyruvate from D-glyceraldehyde 3-phosphate: step 2/5. This Xanthomonas axonopodis pv. citri (strain 306) protein is Phosphoglycerate kinase.